A 228-amino-acid chain; its full sequence is Imidazole glycerol phosphate synthase subunit HisH (228 aa).

The 215-residue stretch at 4–218 (DIAVVDYGMG…VTWNPGEHAS (215 aa)) folds into the Glutamine amidotransferase type-1 domain. Cys-83 (nucleophile) is an active-site residue. Residues His-193 and Glu-195 contribute to the active site.

In terms of assembly, heterodimer of HisH and HisF.

The protein resides in the cytoplasm. It catalyses the reaction 5-[(5-phospho-1-deoxy-D-ribulos-1-ylimino)methylamino]-1-(5-phospho-beta-D-ribosyl)imidazole-4-carboxamide + L-glutamine = D-erythro-1-(imidazol-4-yl)glycerol 3-phosphate + 5-amino-1-(5-phospho-beta-D-ribosyl)imidazole-4-carboxamide + L-glutamate + H(+). The catalysed reaction is L-glutamine + H2O = L-glutamate + NH4(+). Its pathway is amino-acid biosynthesis; L-histidine biosynthesis; L-histidine from 5-phospho-alpha-D-ribose 1-diphosphate: step 5/9. Functionally, IGPS catalyzes the conversion of PRFAR and glutamine to IGP, AICAR and glutamate. The HisH subunit catalyzes the hydrolysis of glutamine to glutamate and ammonia as part of the synthesis of IGP and AICAR. The resulting ammonia molecule is channeled to the active site of HisF. This Thiobacillus denitrificans (strain ATCC 25259 / T1) protein is Imidazole glycerol phosphate synthase subunit HisH.